The chain runs to 154 residues: Interleukin-2 (154 aa).

A signal peptide spans 1–20 (MYRMQLLSCIALSLALITNS). Threonine 23 carries an O-linked (GalNAc...) threonine glycan. Cysteines 78 and 126 form a disulfide.

The protein belongs to the IL-2 family.

The protein resides in the secreted. In terms of biological role, cytokine produced by activated CD4-positive helper T-cells and to a lesser extend activated CD8-positive T-cells and natural killer (NK) cells that plays pivotal roles in the immune response and tolerance. Binds to a receptor complex composed of either the high-affinity trimeric IL-2R (IL2RA/CD25, IL2RB/CD122 and IL2RG/CD132) or the low-affinity dimeric IL-2R (IL2RB and IL2RG). Interaction with the receptor leads to oligomerization and conformation changes in the IL-2R subunits resulting in downstream signaling starting with phosphorylation of JAK1 and JAK3. In turn, JAK1 and JAK3 phosphorylate the receptor to form a docking site leading to the phosphorylation of several substrates including STAT5. This process leads to activation of several pathways including STAT, phosphoinositide-3-kinase/PI3K and mitogen-activated protein kinase/MAPK pathways. Functions as a T-cell growth factor and can increase NK-cell cytolytic activity as well. Promotes strong proliferation of activated B-cells and subsequently immunoglobulin production. Plays a pivotal role in regulating the adaptive immune system by controlling the survival and proliferation of regulatory T-cells, which are required for the maintenance of immune tolerance. Moreover, participates in the differentiation and homeostasis of effector T-cell subsets, including Th1, Th2, Th17 as well as memory CD8-positive T-cells. In Papio hamadryas (Hamadryas baboon), this protein is Interleukin-2 (IL2).